The sequence spans 51 residues: Large ribosomal subunit protein bL33 (51 aa).

Residues 1-23 (MREKIKLESSAGTGHFYTTTKNK) are disordered. Over residues 10-20 (SAGTGHFYTTT) the composition is skewed to polar residues.

This sequence belongs to the bacterial ribosomal protein bL33 family.

This is Large ribosomal subunit protein bL33 from Nitrosomonas eutropha (strain DSM 101675 / C91 / Nm57).